Reading from the N-terminus, the 992-residue chain is Disks large-associated protein 1 (992 aa).

2 disordered regions span residues 154-209 (SLEG…SWWS) and 355-375 (KAMG…SPKV). Residue serine 169 is modified to Phosphoserine. Positions 195 to 209 (SNASNASPTSPSWWS) are enriched in low complexity. 13 positions are modified to phosphoserine: serine 362, serine 365, serine 368, serine 372, serine 389, serine 418, serine 421, serine 425, serine 428, serine 437, serine 509, serine 516, and serine 578. Position 579 is a phosphothreonine (threonine 579). Phosphoserine is present on residues serine 581 and serine 605. The residue at position 606 (threonine 606) is a Phosphothreonine. Phosphoserine is present on residues serine 608 and serine 611. 2 interaction with DYL2 regions span residues 665 to 676 (LSIGIQVDDAEE) and 687 to 698 (SKFQSVGVQVEE). The interval 914 to 980 (WKQMDPLDKK…QNSATESAES (67 aa)) is disordered. 2 stretches are compositionally biased toward basic and acidic residues: residues 918 to 927 (DPLDKKERRA) and 943 to 958 (IRER…EARK). Serine 947 is subject to Phosphoserine. A compositionally biased stretch (polar residues) spans 969–978 (VRQNSATESA). Positions 990 to 992 (TRL) match the PDZ-binding motif.

This sequence belongs to the SAPAP family. In terms of assembly, interacts with guanylate kinase-like domain of DLG1, DLG2, DLG3, DLG4 and AIP1. Interacts with the PDZ domain of SHANK1, SHANK2 and SHANK3. Found in a complex with DLG4 and SHANK1, SHANK2 or SHANK3. Found in a complex with DLG4 and BEGAIN. Interacts with DYL2 and LRFN1. Interacts with MPP2 (via the SH3-Guanylate kinase-like sub-module). Ubiquitinated by TRIM3; leading to proteasomal degradation. Expressed in brain and testis.

The protein localises to the cell membrane. The protein resides in the postsynaptic density. It is found in the synapse. In terms of biological role, part of the postsynaptic scaffold in neuronal cells. This Rattus norvegicus (Rat) protein is Disks large-associated protein 1.